The sequence spans 821 residues: Spindle apparatus protein lin-5 (821 aa).

Residues 161-199 form a disordered region; the sequence is EASSGFRTPKRNNYSLTSLQTPTATARRLRTASSTARRS. A compositionally biased stretch (polar residues) spans 162 to 180; that stretch reads ASSGFRTPKRNNYSLTSLQ. Residues 181 to 199 are compositionally biased toward low complexity; that stretch reads TPTATARRLRTASSTARRS. Residues 211–634 are a coiled coil; that stretch reads KFMRSERELK…REKESAEIKK (424 aa). Disordered regions lie at residues 736–758 and 779–821; these read RSESIQLASPSSAGEFKQPFTPS and LKCS…SKKQ.

Interacts with gpr-1; gpr-1 forms a complex with gpr-2 and GDP-bound goa-1.

It localises to the cytoplasm. It is found in the cell cortex. The protein resides in the cytoskeleton. The protein localises to the spindle. Its subcellular location is the chromosome. It localises to the centromere. It is found in the kinetochore. The protein resides in the microtubule organizing center. The protein localises to the centrosome. In terms of biological role, essential component of the spindle apparatus required for spindle positioning and chromosome movement. Acts to recruit or anchor gpr-1/gpr-2 complex to the spindle and cortex. Also involved, directly or indirectly, in cytokinesis and in the coupling of DNA replication, centrosome duplication and mitotic division. In Caenorhabditis elegans, this protein is Spindle apparatus protein lin-5 (lin-5).